We begin with the raw amino-acid sequence, 502 residues long: UPF0371 protein CLB_0371 (502 aa).

This sequence belongs to the UPF0371 family.

This Clostridium botulinum (strain ATCC 19397 / Type A) protein is UPF0371 protein CLB_0371.